The sequence spans 79 residues: MAEAGARRPFFRRRKTCPFTGPNAPKIDYKDSKLLMRYVSERGKIVPSRITAVSAKKQRELARAIKRSRFLGLLPYVIR.

Belongs to the bacterial ribosomal protein bS18 family. Part of the 30S ribosomal subunit. Forms a tight heterodimer with protein bS6.

Its function is as follows. Binds as a heterodimer with protein bS6 to the central domain of the 16S rRNA, where it helps stabilize the platform of the 30S subunit. This Rhodopseudomonas palustris (strain BisB18) protein is Small ribosomal subunit protein bS18.